Here is a 385-residue protein sequence, read N- to C-terminus: Protein pelota homolog (385 aa).

A Glycyl lysine isopeptide (Lys-Gly) (interchain with G-Cter in SUMO2) cross-link involves residue Lys-162. Ser-374, Ser-380, Ser-381, and Ser-382 each carry phosphoserine.

The protein belongs to the eukaryotic release factor 1 family. Pelota subfamily. In terms of assembly, component of the Pelota-HBS1L complex, also named Dom34-Hbs1 complex, composed of PELO and HBS1L. Interacts with PINK1. Interacts with ABCE1. Interacts with CNOT4. The cofactor is a divalent metal cation.

It localises to the cytoplasm. Functionally, component of the Pelota-HBS1L complex, a complex that recognizes stalled ribosomes and triggers the No-Go Decay (NGD) pathway. In the Pelota-HBS1L complex, PELO recognizes ribosomes stalled at the 3' end of an mRNA and engages stalled ribosomes by destabilizing mRNA in the mRNA channel. Following mRNA extraction from stalled ribosomes by the SKI complex, the Pelota-HBS1L complex promotes recruitment of ABCE1, which drives the disassembly of stalled ribosomes, followed by degradation of damaged mRNAs as part of the NGD pathway. As part of the PINK1-regulated signaling, upon mitochondrial damage is recruited to the ribosome/mRNA-ribonucleoprotein complex associated to mitochondrial outer membrane thereby enabling the recruitment of autophagy receptors and induction of mitophagy. In Pongo abelii (Sumatran orangutan), this protein is Protein pelota homolog (PELO).